A 388-amino-acid polypeptide reads, in one-letter code: MTDALSIARDLIRCPSVTPADAGALGVLENALNAAGFTCHRVTFSEPGTADVDNLYARIGSEGPHITFAGHTDVVPAGDESAWSVGAFSGEVKDGFLHGRGAVDMKGGIACSVAAVLEHLAANGGKPRGDGTGSISFLITGDEEDVSINGTIKLLKWAAERGETFDHCVLGEPSNVETLGDTIKVGRRGSQSGTLYVDGVQGHVAYPHRASNPVPDISRLIVAISDEPLDHGSAQFQASNLEFTSVDVGNKANNVIPGEARAKFNIRYNDNHTQASLRELVETRLAKACGNRIKARIVWEPSNSNVFVTKPGPFTDLAVSAIEEITGRKPELSTSGGTSDARFISSYCPVIEFGLVGQTMHQVDERVPVKDLEKLTQVYRGILTRYFG.

Residue His-71 coordinates Zn(2+). The active site involves Asp-73. Zn(2+) is bound at residue Asp-104. Glu-143 serves as the catalytic Proton acceptor. Residues Glu-144, Glu-172, and His-361 each coordinate Zn(2+).

It belongs to the peptidase M20A family. DapE subfamily. In terms of assembly, homodimer. It depends on Zn(2+) as a cofactor. Co(2+) serves as cofactor.

It catalyses the reaction N-succinyl-(2S,6S)-2,6-diaminopimelate + H2O = (2S,6S)-2,6-diaminopimelate + succinate. It functions in the pathway amino-acid biosynthesis; L-lysine biosynthesis via DAP pathway; LL-2,6-diaminopimelate from (S)-tetrahydrodipicolinate (succinylase route): step 3/3. Catalyzes the hydrolysis of N-succinyl-L,L-diaminopimelic acid (SDAP), forming succinate and LL-2,6-diaminopimelate (DAP), an intermediate involved in the bacterial biosynthesis of lysine and meso-diaminopimelic acid, an essential component of bacterial cell walls. This chain is Succinyl-diaminopimelate desuccinylase, found in Bradyrhizobium diazoefficiens (strain JCM 10833 / BCRC 13528 / IAM 13628 / NBRC 14792 / USDA 110).